We begin with the raw amino-acid sequence, 94 residues long: Co-chaperonin GroES (94 aa).

The protein belongs to the GroES chaperonin family. As to quaternary structure, heptamer of 7 subunits arranged in a ring. Interacts with the chaperonin GroEL.

It is found in the cytoplasm. Its function is as follows. Together with the chaperonin GroEL, plays an essential role in assisting protein folding. The GroEL-GroES system forms a nano-cage that allows encapsulation of the non-native substrate proteins and provides a physical environment optimized to promote and accelerate protein folding. GroES binds to the apical surface of the GroEL ring, thereby capping the opening of the GroEL channel. The sequence is that of Co-chaperonin GroES from Caldanaerobacter subterraneus subsp. tengcongensis (strain DSM 15242 / JCM 11007 / NBRC 100824 / MB4) (Thermoanaerobacter tengcongensis).